A 287-amino-acid chain; its full sequence is Protein PXR1 (287 aa).

Residues 25–72 (TSRFGHLQLEKFGWKPGMGLGMSPTSSHKTHIKVSIKDDNLGLGAKIK) form the G-patch domain. Positions 143–155 (LKSYSNDKKRSRD) are enriched in basic and acidic residues. The tract at residues 143–254 (LKSYSNDKKR…TTASNIPSTV (112 aa)) is disordered. The span at 163-190 (SKNKSKKQKKDKKDKKDKKDKKDKKDKK) shows a compositional bias: basic residues. A compositionally biased stretch (basic and acidic residues) spans 191–200 (DKKDKTEKKE). Basic residues predominate over residues 201-220 (KKEKKEKKEKKEKKDKKDKK). The span at 221–230 (DKKDKIDKKD) shows a compositional bias: basic and acidic residues. Over residues 239 to 251 (NNIEVSTTASNIP) the composition is skewed to polar residues.

It belongs to the PINX1 family.

Its subcellular location is the nucleus. The protein localises to the nucleolus. Its function is as follows. Involved in rRNA-processing at A0, A1 and A2 sites and negatively regulates telomerase. In Vanderwaltozyma polyspora (strain ATCC 22028 / DSM 70294 / BCRC 21397 / CBS 2163 / NBRC 10782 / NRRL Y-8283 / UCD 57-17) (Kluyveromyces polysporus), this protein is Protein PXR1 (PXR1).